Consider the following 362-residue polypeptide: Porin Omp2b (362 aa).

Positions 1–22 (MNIKSLLLGSAAALVAASGAQA) are cleaved as a signal peptide.

It belongs to the alphaproteobacteria porin family. As to quaternary structure, homotrimer.

The protein resides in the cell outer membrane. Its function is as follows. Forms passive diffusion pores that allow small molecular weight hydrophilic materials across the outer membrane. In Brucella suis biovar 1 (strain 1330), this protein is Porin Omp2b (omp2b).